A 460-amino-acid chain; its full sequence is Proline--tRNA ligase (460 aa).

It belongs to the class-II aminoacyl-tRNA synthetase family. ProS type 3 subfamily. Homodimer.

The protein localises to the cytoplasm. It catalyses the reaction tRNA(Pro) + L-proline + ATP = L-prolyl-tRNA(Pro) + AMP + diphosphate. In terms of biological role, catalyzes the attachment of proline to tRNA(Pro) in a two-step reaction: proline is first activated by ATP to form Pro-AMP and then transferred to the acceptor end of tRNA(Pro). The polypeptide is Proline--tRNA ligase (Methanococcus maripaludis (strain DSM 14266 / JCM 13030 / NBRC 101832 / S2 / LL)).